The sequence spans 371 residues: uncharacterized protein (371 aa).

Position 76 (His-76) interacts with Zn(2+). Asp-78 is a catalytic residue. Asp-106 serves as a coordination point for Zn(2+). Catalysis depends on Glu-139, which acts as the Proton acceptor. Positions 140, 163, and 344 each coordinate Zn(2+).

It belongs to the peptidase M20A family. It depends on Zn(2+) as a cofactor.

In terms of biological role, could be a peptidase. This is an uncharacterized protein from Bacillus subtilis (strain 168).